The chain runs to 428 residues: Serine--tRNA ligase (428 aa).

Residue 235–237 coordinates L-serine; sequence TAE. Residue 266–268 coordinates ATP; it reads RSE. Residue E289 participates in L-serine binding. Residue 353–356 coordinates ATP; sequence EISS. Position 389 (S389) interacts with L-serine.

The protein belongs to the class-II aminoacyl-tRNA synthetase family. Type-1 seryl-tRNA synthetase subfamily. As to quaternary structure, homodimer. The tRNA molecule binds across the dimer.

Its subcellular location is the cytoplasm. The enzyme catalyses tRNA(Ser) + L-serine + ATP = L-seryl-tRNA(Ser) + AMP + diphosphate + H(+). The catalysed reaction is tRNA(Sec) + L-serine + ATP = L-seryl-tRNA(Sec) + AMP + diphosphate + H(+). Its pathway is aminoacyl-tRNA biosynthesis; selenocysteinyl-tRNA(Sec) biosynthesis; L-seryl-tRNA(Sec) from L-serine and tRNA(Sec): step 1/1. In terms of biological role, catalyzes the attachment of serine to tRNA(Ser). Is also able to aminoacylate tRNA(Sec) with serine, to form the misacylated tRNA L-seryl-tRNA(Sec), which will be further converted into selenocysteinyl-tRNA(Sec). This chain is Serine--tRNA ligase, found in Shewanella pealeana (strain ATCC 700345 / ANG-SQ1).